A 214-amino-acid polypeptide reads, in one-letter code: Orotate phosphoribosyltransferase (214 aa).

5-phospho-alpha-D-ribose 1-diphosphate is bound at residue K26. Position 34–35 (34–35) interacts with orotate; it reads FF. 5-phospho-alpha-D-ribose 1-diphosphate is bound by residues 72–73, R99, K100, K103, H105, and 124–132; these read YK and DDVITAGTA. Orotate is bound by residues T128 and R156.

This sequence belongs to the purine/pyrimidine phosphoribosyltransferase family. PyrE subfamily. As to quaternary structure, homodimer. Mg(2+) is required as a cofactor.

The catalysed reaction is orotidine 5'-phosphate + diphosphate = orotate + 5-phospho-alpha-D-ribose 1-diphosphate. The protein operates within pyrimidine metabolism; UMP biosynthesis via de novo pathway; UMP from orotate: step 1/2. Functionally, catalyzes the transfer of a ribosyl phosphate group from 5-phosphoribose 1-diphosphate to orotate, leading to the formation of orotidine monophosphate (OMP). This Pseudoalteromonas translucida (strain TAC 125) protein is Orotate phosphoribosyltransferase.